The chain runs to 238 residues: Sugar fermentation stimulation protein homolog (238 aa).

This sequence belongs to the SfsA family.

The polypeptide is Sugar fermentation stimulation protein homolog (Shewanella denitrificans (strain OS217 / ATCC BAA-1090 / DSM 15013)).